Consider the following 534-residue polypeptide: DM7 family protein GE17491 (534 aa).

This sequence belongs to the DM7 family.

This Drosophila yakuba (Fruit fly) protein is DM7 family protein GE17491.